We begin with the raw amino-acid sequence, 453 residues long: Tubulin alpha-2 chain (453 aa).

Gln11 serves as a coordination point for GTP. N6-acetyllysine is present on Lys40. GTP contacts are provided by Glu71, Gly144, Thr145, Thr179, Asn206, and Asn228. Position 71 (Glu71) interacts with Mg(2+). Glu254 is an active-site residue. The segment at 432–453 is disordered; that stretch reads YEEVGAETAEGEGEEEDFGEEY.

This sequence belongs to the tubulin family. As to quaternary structure, dimer of alpha and beta chains. A typical microtubule is a hollow water-filled tube with an outer diameter of 25 nm and an inner diameter of 15 nM. Alpha-beta heterodimers associate head-to-tail to form protofilaments running lengthwise along the microtubule wall with the beta-tubulin subunit facing the microtubule plus end conferring a structural polarity. Microtubules usually have 13 protofilaments but different protofilament numbers can be found in some organisms and specialized cells. Mg(2+) is required as a cofactor. Post-translationally, undergoes a tyrosination/detyrosination cycle, the cyclic removal and re-addition of a C-terminal tyrosine residue by the enzymes tubulin tyrosine carboxypeptidase (TTCP) and tubulin tyrosine ligase (TTL), respectively. Acetylation of alpha chains at Lys-40 stabilizes microtubules and affects affinity and processivity of microtubule motors. This modification has a role in multiple cellular functions, ranging from cell motility, cell cycle progression or cell differentiation to intracellular trafficking and signaling.

The protein resides in the cytoplasm. It is found in the cytoskeleton. The catalysed reaction is GTP + H2O = GDP + phosphate + H(+). Functionally, tubulin is the major constituent of microtubules, a cylinder consisting of laterally associated linear protofilaments composed of alpha- and beta-tubulin heterodimers. Microtubules grow by the addition of GTP-tubulin dimers to the microtubule end, where a stabilizing cap forms. Below the cap, tubulin dimers are in GDP-bound state, owing to GTPase activity of alpha-tubulin. In Pelvetia fastigiata (Brown alga), this protein is Tubulin alpha-2 chain (TUBA2).